The following is a 260-amino-acid chain: Outer membrane protein assembly factor BamD (260 aa).

Residues M1 to A19 form the signal peptide. C20 carries the N-palmitoyl cysteine lipid modification. C20 carries S-diacylglycerol cysteine lipidation.

Belongs to the BamD family. Part of the Bam complex.

The protein resides in the cell outer membrane. Its function is as follows. Part of the outer membrane protein assembly complex, which is involved in assembly and insertion of beta-barrel proteins into the outer membrane. The polypeptide is Outer membrane protein assembly factor BamD (Pasteurella multocida (strain Pm70)).